The chain runs to 357 residues: Holliday junction branch migration complex subunit RuvB (357 aa).

Positions 1–10 (MAIQSDSLSS) are enriched in polar residues. The tract at residues 1 to 30 (MAIQSDSLSSRPDAPRLVAPAPASPNEESI) is disordered. The tract at residues 5–195 (SDSLSSRPDA…FGIVSRLEFY (191 aa)) is large ATPase domain (RuvB-L). Residues leucine 34, arginine 35, glycine 76, lysine 79, threonine 80, threonine 81, 142-144 (EDF), arginine 185, tyrosine 195, and arginine 232 each bind ATP. Residue threonine 80 coordinates Mg(2+). The small ATPAse domain (RuvB-S) stretch occupies residues 196–266 (NTDDLAHIVT…AANQALAMLE (71 aa)). The interval 269–357 (PQGLDLMDRK…QPSSGDLFGA (89 aa)) is head domain (RuvB-H). The DNA site is built by arginine 305, arginine 324, and arginine 329.

It belongs to the RuvB family. Homohexamer. Forms an RuvA(8)-RuvB(12)-Holliday junction (HJ) complex. HJ DNA is sandwiched between 2 RuvA tetramers; dsDNA enters through RuvA and exits via RuvB. An RuvB hexamer assembles on each DNA strand where it exits the tetramer. Each RuvB hexamer is contacted by two RuvA subunits (via domain III) on 2 adjacent RuvB subunits; this complex drives branch migration. In the full resolvosome a probable DNA-RuvA(4)-RuvB(12)-RuvC(2) complex forms which resolves the HJ.

It is found in the cytoplasm. It carries out the reaction ATP + H2O = ADP + phosphate + H(+). Its function is as follows. The RuvA-RuvB-RuvC complex processes Holliday junction (HJ) DNA during genetic recombination and DNA repair, while the RuvA-RuvB complex plays an important role in the rescue of blocked DNA replication forks via replication fork reversal (RFR). RuvA specifically binds to HJ cruciform DNA, conferring on it an open structure. The RuvB hexamer acts as an ATP-dependent pump, pulling dsDNA into and through the RuvAB complex. RuvB forms 2 homohexamers on either side of HJ DNA bound by 1 or 2 RuvA tetramers; 4 subunits per hexamer contact DNA at a time. Coordinated motions by a converter formed by DNA-disengaged RuvB subunits stimulates ATP hydrolysis and nucleotide exchange. Immobilization of the converter enables RuvB to convert the ATP-contained energy into a lever motion, pulling 2 nucleotides of DNA out of the RuvA tetramer per ATP hydrolyzed, thus driving DNA branch migration. The RuvB motors rotate together with the DNA substrate, which together with the progressing nucleotide cycle form the mechanistic basis for DNA recombination by continuous HJ branch migration. Branch migration allows RuvC to scan DNA until it finds its consensus sequence, where it cleaves and resolves cruciform DNA. This chain is Holliday junction branch migration complex subunit RuvB, found in Bordetella avium (strain 197N).